A 270-amino-acid polypeptide reads, in one-letter code: Regulatory protein RecX (270 aa).

This sequence belongs to the RecX family.

The protein localises to the cytoplasm. Its function is as follows. Modulates RecA activity. This is Regulatory protein RecX from Bacillus mycoides (strain KBAB4) (Bacillus weihenstephanensis).